A 295-amino-acid polypeptide reads, in one-letter code: 4-hydroxy-tetrahydrodipicolinate synthase (295 aa).

T46 serves as a coordination point for pyruvate. The Proton donor/acceptor role is filled by Y134. Catalysis depends on K162, which acts as the Schiff-base intermediate with substrate. I205 provides a ligand contact to pyruvate.

The protein belongs to the DapA family. As to quaternary structure, homotetramer; dimer of dimers.

The protein localises to the cytoplasm. The enzyme catalyses L-aspartate 4-semialdehyde + pyruvate = (2S,4S)-4-hydroxy-2,3,4,5-tetrahydrodipicolinate + H2O + H(+). It functions in the pathway amino-acid biosynthesis; L-lysine biosynthesis via DAP pathway; (S)-tetrahydrodipicolinate from L-aspartate: step 3/4. In terms of biological role, catalyzes the condensation of (S)-aspartate-beta-semialdehyde [(S)-ASA] and pyruvate to 4-hydroxy-tetrahydrodipicolinate (HTPA). The sequence is that of 4-hydroxy-tetrahydrodipicolinate synthase from Anaeromyxobacter dehalogenans (strain 2CP-1 / ATCC BAA-258).